The primary structure comprises 414 residues: Tryptophan synthase beta chain (414 aa).

The span at 1 to 12 (MVSTISRHDQNK) shows a compositional bias: basic and acidic residues. The disordered stretch occupies residues 1 to 23 (MVSTISRHDQNKNNDYLNQPSKE). Lys109 is subject to N6-(pyridoxal phosphate)lysine.

It belongs to the TrpB family. As to quaternary structure, tetramer of two alpha and two beta chains. It depends on pyridoxal 5'-phosphate as a cofactor.

The enzyme catalyses (1S,2R)-1-C-(indol-3-yl)glycerol 3-phosphate + L-serine = D-glyceraldehyde 3-phosphate + L-tryptophan + H2O. It functions in the pathway amino-acid biosynthesis; L-tryptophan biosynthesis; L-tryptophan from chorismate: step 5/5. In terms of biological role, the beta subunit is responsible for the synthesis of L-tryptophan from indole and L-serine. The protein is Tryptophan synthase beta chain of Prochlorococcus marinus (strain MIT 9515).